Reading from the N-terminus, the 177-residue chain is Large ribosomal subunit protein uL6 (177 aa).

Positions Arg-152–Arg-171 are enriched in basic and acidic residues. Residues Arg-152 to Lys-177 are disordered.

It belongs to the universal ribosomal protein uL6 family. As to quaternary structure, part of the 50S ribosomal subunit.

This protein binds to the 23S rRNA, and is important in its secondary structure. It is located near the subunit interface in the base of the L7/L12 stalk, and near the tRNA binding site of the peptidyltransferase center. The protein is Large ribosomal subunit protein uL6 of Shewanella putrefaciens (strain CN-32 / ATCC BAA-453).